We begin with the raw amino-acid sequence, 148 residues long: Calmodulin-4 (148 aa).

EF-hand domains are found at residues 8–43, 44–79, 80–115, and 116–148; these read EEVAEFQAAFNRFDKNKDGHISVEELGDVMKQLGKN, LPEKDLKALISKLDTDGDGKISFEEFLTAIEKYKKG, HRAGELRAVFNVLDQNGDGYITVDELKESLSKLGES, and LSQEELEDMIRVADVDQDGKVKYEEFVRLHVEN. Ca(2+) contacts are provided by Asp-21, Asn-23, Asp-25, His-27, Glu-32, Asp-57, Asp-59, Asp-61, Lys-63, Glu-68, Asp-93, Asn-95, Asp-97, Tyr-99, and Glu-104.

Functionally, implicated in the early stage of ectopic ossification. This chain is Calmodulin-4 (Calm4), found in Mus musculus (Mouse).